The chain runs to 257 residues: UPF0246 protein YaaA (257 aa).

Belongs to the UPF0246 family.

This Salmonella choleraesuis (strain SC-B67) protein is UPF0246 protein YaaA.